The following is a 101-amino-acid chain: Putative membrane protein insertion efficiency factor (101 aa).

Belongs to the UPF0161 family.

The protein localises to the cell membrane. Could be involved in insertion of integral membrane proteins into the membrane. The sequence is that of Putative membrane protein insertion efficiency factor from Lacticaseibacillus casei (strain BL23) (Lactobacillus casei).